The sequence spans 207 residues: dTTP/UTP pyrophosphatase (207 aa).

Asp68 acts as the Proton acceptor in catalysis.

The protein belongs to the Maf family. YhdE subfamily. Requires a divalent metal cation as cofactor.

The protein resides in the cytoplasm. It catalyses the reaction dTTP + H2O = dTMP + diphosphate + H(+). The catalysed reaction is UTP + H2O = UMP + diphosphate + H(+). Its function is as follows. Nucleoside triphosphate pyrophosphatase that hydrolyzes dTTP and UTP. May have a dual role in cell division arrest and in preventing the incorporation of modified nucleotides into cellular nucleic acids. The protein is dTTP/UTP pyrophosphatase of Staphylothermus marinus (strain ATCC 43588 / DSM 3639 / JCM 9404 / F1).